A 180-amino-acid polypeptide reads, in one-letter code: Acireductone dioxygenase (180 aa).

4 residues coordinate Fe(2+): H97, H99, E103, and H141. 4 residues coordinate Ni(2+): H97, H99, E103, and H141.

Belongs to the acireductone dioxygenase (ARD) family. As to quaternary structure, monomer. It depends on Fe(2+) as a cofactor. Ni(2+) is required as a cofactor.

It catalyses the reaction 1,2-dihydroxy-5-(methylsulfanyl)pent-1-en-3-one + O2 = 3-(methylsulfanyl)propanoate + CO + formate + 2 H(+). It carries out the reaction 1,2-dihydroxy-5-(methylsulfanyl)pent-1-en-3-one + O2 = 4-methylsulfanyl-2-oxobutanoate + formate + 2 H(+). The protein operates within amino-acid biosynthesis; L-methionine biosynthesis via salvage pathway; L-methionine from S-methyl-5-thio-alpha-D-ribose 1-phosphate: step 5/6. Functionally, catalyzes 2 different reactions between oxygen and the acireductone 1,2-dihydroxy-3-keto-5-methylthiopentene (DHK-MTPene) depending upon the metal bound in the active site. Fe-containing acireductone dioxygenase (Fe-ARD) produces formate and 2-keto-4-methylthiobutyrate (KMTB), the alpha-ketoacid precursor of methionine in the methionine recycle pathway. Ni-containing acireductone dioxygenase (Ni-ARD) produces methylthiopropionate, carbon monoxide and formate, and does not lie on the methionine recycle pathway. This chain is Acireductone dioxygenase, found in Enterobacter sp. (strain 638).